A 140-amino-acid chain; its full sequence is Small ribosomal subunit protein uS19 (140 aa).

This sequence belongs to the universal ribosomal protein uS19 family.

In terms of biological role, protein S19 forms a complex with S13 that binds strongly to the 16S ribosomal RNA. The sequence is that of Small ribosomal subunit protein uS19 from Metallosphaera sedula (strain ATCC 51363 / DSM 5348 / JCM 9185 / NBRC 15509 / TH2).